The sequence spans 343 residues: tRNA N6-adenosine threonylcarbamoyltransferase (343 aa).

Positions 111 and 115 each coordinate Fe cation. Substrate is bound by residues leucine 134–glycine 138, aspartate 167, glycine 180, and asparagine 276. Aspartate 304 serves as a coordination point for Fe cation.

This sequence belongs to the KAE1 / TsaD family. Fe(2+) is required as a cofactor.

Its subcellular location is the cytoplasm. The catalysed reaction is L-threonylcarbamoyladenylate + adenosine(37) in tRNA = N(6)-L-threonylcarbamoyladenosine(37) in tRNA + AMP + H(+). Required for the formation of a threonylcarbamoyl group on adenosine at position 37 (t(6)A37) in tRNAs that read codons beginning with adenine. Is involved in the transfer of the threonylcarbamoyl moiety of threonylcarbamoyl-AMP (TC-AMP) to the N6 group of A37, together with TsaE and TsaB. TsaD likely plays a direct catalytic role in this reaction. The polypeptide is tRNA N6-adenosine threonylcarbamoyltransferase (Hahella chejuensis (strain KCTC 2396)).